The primary structure comprises 110 residues: MSETRAVLRGVRLSVDKGRLVADLIRGKKVDQALNILAFTQKKAAVIVKKVLESAIANAEHNDGADIDDLKVKTIFVEQGTTLKRFTARAKGRGNRISKPTCHIYVTVGN.

This sequence belongs to the universal ribosomal protein uL22 family. As to quaternary structure, part of the 50S ribosomal subunit.

In terms of biological role, this protein binds specifically to 23S rRNA; its binding is stimulated by other ribosomal proteins, e.g. L4, L17, and L20. It is important during the early stages of 50S assembly. It makes multiple contacts with different domains of the 23S rRNA in the assembled 50S subunit and ribosome. The globular domain of the protein is located near the polypeptide exit tunnel on the outside of the subunit, while an extended beta-hairpin is found that lines the wall of the exit tunnel in the center of the 70S ribosome. This chain is Large ribosomal subunit protein uL22, found in Acidovorax ebreus (strain TPSY) (Diaphorobacter sp. (strain TPSY)).